Reading from the N-terminus, the 135-residue chain is MPKRRRIALIAHDHKKDDMIAFAQTHKAFLMRCDLLATGTTGGRLQDEVGLSVQRMLSGPWGGDLQIGAQLAEGRVDAVIFLRDPMTPQPHEPDINALVRACDVHNIPCATNLATADLVMIALGLAQPDPKEIHA.

In terms of domain architecture, MGS-like spans 1-135; it reads MPKRRRIALI…AQPDPKEIHA (135 aa). Substrate contacts are provided by residues His-12, Lys-16, 38-41, and 58-59; these read TGTT and SG. The active-site Proton donor/acceptor is Asp-64. His-91 contacts substrate.

It belongs to the methylglyoxal synthase family.

The catalysed reaction is dihydroxyacetone phosphate = methylglyoxal + phosphate. In terms of biological role, catalyzes the formation of methylglyoxal from dihydroxyacetone phosphate. The protein is Methylglyoxal synthase of Ralstonia nicotianae (strain ATCC BAA-1114 / GMI1000) (Ralstonia solanacearum).